Here is a 306-residue protein sequence, read N- to C-terminus: D-alanine--D-alanine ligase (306 aa).

Residues 107-300 (KEAYRAAGLP…FGQLCAWMVE (194 aa)) enclose the ATP-grasp domain. An ATP-binding site is contributed by 134-184 (MQPPYVVKPYNEGSSVGVYIVTEAANGPPVLAPDLPATLMVEEYVPGRELS). Asp-251, Glu-267, and Asn-269 together coordinate Mg(2+).

This sequence belongs to the D-alanine--D-alanine ligase family. Requires Mg(2+) as cofactor. It depends on Mn(2+) as a cofactor.

It localises to the cytoplasm. It catalyses the reaction 2 D-alanine + ATP = D-alanyl-D-alanine + ADP + phosphate + H(+). It functions in the pathway cell wall biogenesis; peptidoglycan biosynthesis. Functionally, cell wall formation. The protein is D-alanine--D-alanine ligase of Ruegeria pomeroyi (strain ATCC 700808 / DSM 15171 / DSS-3) (Silicibacter pomeroyi).